Reading from the N-terminus, the 391-residue chain is DNA-directed RNA polymerase subunit Rpo1C (391 aa).

It belongs to the RNA polymerase beta' chain family. Part of the RNA polymerase complex.

Its subcellular location is the cytoplasm. The enzyme catalyses RNA(n) + a ribonucleoside 5'-triphosphate = RNA(n+1) + diphosphate. Functionally, DNA-dependent RNA polymerase (RNAP) catalyzes the transcription of DNA into RNA using the four ribonucleoside triphosphates as substrates. Forms part of the jaw domain. This chain is DNA-directed RNA polymerase subunit Rpo1C, found in Thermococcus gammatolerans (strain DSM 15229 / JCM 11827 / EJ3).